The following is a 281-amino-acid chain: Diaminopimelate epimerase (281 aa).

Substrate-binding residues include Asn-11 and Asn-65. Cys-74 (proton donor) is an active-site residue. Substrate is bound by residues 75-76 (GN), Asn-164, Asn-197, and 215-216 (ER). The active-site Proton acceptor is Cys-224. A substrate-binding site is contributed by 225–226 (GT).

This sequence belongs to the diaminopimelate epimerase family. In terms of assembly, homodimer.

The protein localises to the cytoplasm. The enzyme catalyses (2S,6S)-2,6-diaminopimelate = meso-2,6-diaminopimelate. Its pathway is amino-acid biosynthesis; L-lysine biosynthesis via DAP pathway; DL-2,6-diaminopimelate from LL-2,6-diaminopimelate: step 1/1. Functionally, catalyzes the stereoinversion of LL-2,6-diaminopimelate (L,L-DAP) to meso-diaminopimelate (meso-DAP), a precursor of L-lysine and an essential component of the bacterial peptidoglycan. This Heliobacterium modesticaldum (strain ATCC 51547 / Ice1) protein is Diaminopimelate epimerase.